A 45-amino-acid polypeptide reads, in one-letter code: Large ribosomal subunit protein bL34 (45 aa).

The tract at residues 1–45 is disordered; sequence MTKRTLGGTSRKRKRVSGFRVRMRSHTGRRVIRTRRKRGRSRLAV. Over residues 10–45 the composition is skewed to basic residues; the sequence is SRKRKRVSGFRVRMRSHTGRRVIRTRRKRGRSRLAV.

It belongs to the bacterial ribosomal protein bL34 family.

The polypeptide is Large ribosomal subunit protein bL34 (Parasynechococcus marenigrum (strain WH8102)).